The primary structure comprises 418 residues: Probable basic-leucine zipper transcription factor E (418 aa).

Residues 8–47 are a coiled coil; that stretch reads IQQIQQLHMLLQQQQQQQQQQQQQQQQQQQQLQQQNFQLT. Low complexity-rich tracts occupy residues 51–71 and 95–134; these read FQIPVNNNNNNNNNSNNNNNN and INTTTTTTNNNNNNNNNNNNNNNNNNNNNNNNNNNNNNNT. 4 disordered regions span residues 51–75, 95–149, 165–196, and 211–252; these read FQIPVNNNNNNNNNSNNNNNNETAF, INTT…KKQK, PTAAVKKKPPAKKSAKNAASQPTSPTLSTTNT, and KNQE…KNRR. A compositionally biased stretch (basic residues) spans 169 to 179; sequence VKKKPPAKKSA. The span at 180–196 shows a compositional bias: low complexity; sequence KNAASQPTSPTLSTTNT. Residues 220–239 show a composition bias toward acidic residues; the sequence is DNSEESDSDEEDFENGDNEN. In terms of domain architecture, bZIP spans 246-309; that stretch reads GDRKNRRLLK…QLMKDKVRYL (64 aa). The tract at residues 248-268 is basic motif; that stretch reads RKNRRLLKNREAAQLFRQRQK. Residues 274–281 form a leucine-zipper region; it reads LESKASSL. Residues 324-362 adopt a coiled-coil conformation; sequence SVVNQDNINNLNNNLNGLQNQQNNNNNNNNNNNNNNNNN. Residues 336–418 are disordered; the sequence is NNLNGLQNQQ…DSLLFNLPPD (83 aa).

Belongs to the bZIP family.

The protein localises to the nucleus. Functionally, probable transcriptional regulator. The chain is Probable basic-leucine zipper transcription factor E (bzpE) from Dictyostelium discoideum (Social amoeba).